We begin with the raw amino-acid sequence, 427 residues long: Trigger factor (427 aa).

The PPIase FKBP-type domain occupies 163-248 (GDTVVIDFVG…IHEVKTKEVP (86 aa)).

Belongs to the FKBP-type PPIase family. Tig subfamily.

The protein resides in the cytoplasm. The enzyme catalyses [protein]-peptidylproline (omega=180) = [protein]-peptidylproline (omega=0). Its function is as follows. Involved in protein export. Acts as a chaperone by maintaining the newly synthesized protein in an open conformation. Functions as a peptidyl-prolyl cis-trans isomerase. The protein is Trigger factor of Streptococcus agalactiae serotype Ia (strain ATCC 27591 / A909 / CDC SS700).